The chain runs to 311 residues: Aspartate carbamoyltransferase catalytic subunit (311 aa).

The carbamoyl phosphate site is built by Arg-55 and Thr-56. An L-aspartate-binding site is contributed by Lys-85. Positions 106, 135, and 138 each coordinate carbamoyl phosphate. Residues Arg-168 and Arg-230 each coordinate L-aspartate. Residues Leu-268 and Pro-269 each contribute to the carbamoyl phosphate site.

The protein belongs to the aspartate/ornithine carbamoyltransferase superfamily. ATCase family. As to quaternary structure, heterododecamer (2C3:3R2) of six catalytic PyrB chains organized as two trimers (C3), and six regulatory PyrI chains organized as three dimers (R2).

The catalysed reaction is carbamoyl phosphate + L-aspartate = N-carbamoyl-L-aspartate + phosphate + H(+). It participates in pyrimidine metabolism; UMP biosynthesis via de novo pathway; (S)-dihydroorotate from bicarbonate: step 2/3. In terms of biological role, catalyzes the condensation of carbamoyl phosphate and aspartate to form carbamoyl aspartate and inorganic phosphate, the committed step in the de novo pyrimidine nucleotide biosynthesis pathway. The polypeptide is Aspartate carbamoyltransferase catalytic subunit (Klebsiella pneumoniae (strain 342)).